The primary structure comprises 173 residues: Ribulose bisphosphate carboxylase small subunit, chloroplastic 1 (173 aa).

The transit peptide at 1–52 directs the protein to the chloroplast; it reads MMVSTAAVARVRPAQTNMVGAFNGCRSSVAFPATRKANNDLSTLPSSGGRVS.

The protein belongs to the RuBisCO small chain family. Heterohexadecamer of 8 large and 8 small subunits.

It localises to the plastid. The protein localises to the chloroplast. Functionally, ruBisCO catalyzes two reactions: the carboxylation of D-ribulose 1,5-bisphosphate, the primary event in carbon dioxide fixation, as well as the oxidative fragmentation of the pentose substrate. Both reactions occur simultaneously and in competition at the same active site. Although the small subunit is not catalytic it is essential for maximal activity. This chain is Ribulose bisphosphate carboxylase small subunit, chloroplastic 1, found in Lemna gibba (Swollen duckweed).